Here is a 115-residue protein sequence, read N- to C-terminus: Parathyroid hormone (115 aa).

An N-terminal signal peptide occupies residues 1 to 25; the sequence is MMSASTMAKVMILMLAVCLLTQADG. A propeptide spanning residues 26 to 31 is cleaved from the precursor; sequence KPVKKR. Residues 51–69 are important for receptor binding; the sequence is RMQWLRKKLQDVHNFVSLG. The disordered stretch occupies residues 76-101; sequence EGSYQRPTKKEENVLVDGNSKSLGEG.

It belongs to the parathyroid hormone family. Interacts with PTH1R (via N-terminal extracellular domain). As to expression, hypothalamus and parathyroid gland.

The protein resides in the secreted. Functionally, parathyroid hormone elevates calcium level by dissolving the salts in bone and preventing their renal excretion. Acts by binding to its receptor, PTH1R, activating G protein-coupled receptor signaling. Stimulates [1-14C]-2-deoxy-D-glucose (2DG) transport and glycogen synthesis in osteoblastic cells. The protein is Parathyroid hormone (Pth) of Rattus norvegicus (Rat).